The primary structure comprises 293 residues: MKI67 FHA domain-interacting nucleolar phosphoprotein (293 aa).

Alanine 2 bears the N-acetylalanine mark. A Glycyl lysine isopeptide (Lys-Gly) (interchain with G-Cter in SUMO2) cross-link involves residue lysine 38. Residues 45 to 123 (GVVYVRHLPN…RLLECHFMPP (79 aa)) form the RRM domain. An Omega-N-methylarginine; by PRMT1 and PRMT8 modification is found at arginine 114. Residue lysine 139 forms a Glycyl lysine isopeptide (Lys-Gly) (interchain with G-Cter in SUMO2) linkage. Position 145 is a phosphoserine (serine 145). Residues lysine 179 and lysine 192 each participate in a glycyl lysine isopeptide (Lys-Gly) (interchain with G-Cter in SUMO2) cross-link. Residues 197–207 (SKTNRQTSTKG) show a composition bias toward polar residues. A disordered region spans residues 197–239 (SKTNRQTSTKGQVLRKKKKKVSGTLDTPEKTVDSQGPTPVCTP). The residue at position 218 (serine 218) is a Phosphoserine. Threonine 223 is modified (phosphothreonine). The segment at 226 to 269 (KTVDSQGPTPVCTPTFLERRKSQVAELNDDDKDDEIVFKQPISC) is interaction with MKI67. Serine 230 bears the Phosphoserine mark. 2 positions are modified to phosphothreonine: threonine 234 and threonine 238. Omega-N-methylated arginine; by PRMT1 and PRMT8 occurs at positions 244 and 245. The residue at position 247 (serine 247) is a Phosphoserine. A Glycyl lysine isopeptide (Lys-Gly) (interchain with G-Cter in SUMO1); alternate cross-link involves residue lysine 271. A Glycyl lysine isopeptide (Lys-Gly) (interchain with G-Cter in SUMO2); alternate cross-link involves residue lysine 271. A disordered region spans residues 271–293 (KEEIQETQTPTHSRKKRRRSSNQ). At threonine 279 the chain carries Phosphothreonine. Over residues 282–293 (HSRKKRRRSSNQ) the composition is skewed to basic residues. Arginine 284 bears the Omega-N-methylarginine; by PRMT1 and PRMT8 mark.

In terms of assembly, binds to the FHA domain of MKI67; this interaction is enhanced in mitosis. Post-translationally, sequentially phosphorylated on Thr-238, Thr-234 and Ser-230. Thr-234 is phosphorylated only when Thr-238 is phosphorylated. Likewise, phosphorylation at Ser-230 requires that Thr-234 and Thr-238 are phosphorylated. Phosphorylation enhances MKI67 binding.

Its subcellular location is the nucleus. It is found in the nucleolus. It localises to the chromosome. The polypeptide is MKI67 FHA domain-interacting nucleolar phosphoprotein (NIFK) (Homo sapiens (Human)).